Consider the following 392-residue polypeptide: 23S rRNA (uracil(747)-C(5))-methyltransferase RlmC (392 aa).

Residues Cys-4, Cys-12, Cys-15, and Cys-93 each contribute to the [4Fe-4S] cluster site. S-adenosyl-L-methionine-binding residues include Gln-218, Phe-247, Glu-275, and Asn-321. Residue Cys-348 is the Nucleophile of the active site.

This sequence belongs to the class I-like SAM-binding methyltransferase superfamily. RNA M5U methyltransferase family. RlmC subfamily.

The catalysed reaction is uridine(747) in 23S rRNA + S-adenosyl-L-methionine = 5-methyluridine(747) in 23S rRNA + S-adenosyl-L-homocysteine + H(+). Its function is as follows. Catalyzes the formation of 5-methyl-uridine at position 747 (m5U747) in 23S rRNA. The chain is 23S rRNA (uracil(747)-C(5))-methyltransferase RlmC from Haemophilus influenzae (strain PittGG).